A 156-amino-acid polypeptide reads, in one-letter code: Sensor histidine kinase component HK2 (156 aa).

Residues 1–42 (MALVLAAAGAVTVVQFRDAAHEADPDGALRGLTDDITADLVR) lie on the Extracellular side of the membrane. Residues 43-63 (ELVTILPIVLVIAAVAAYLLS) form a helical membrane-spanning segment. In terms of domain architecture, HAMP spans 64-120 (RAALRPVDRIRAAAQTLTTTPHPDTDAPLPVPPTDDEIAWLATTLNTMLTRLQRALA). The Cytoplasmic segment spans residues 64 to 156 (RAALRPVDRI…RCAGPDPPTS (93 aa)). Positions 128–156 (DASHELRTPLALLTTELELRCAGPDPPTS) constitute a Histidine kinase; first part domain. Phosphohistidine; by autocatalysis is present on H131.

As to quaternary structure, homodimer. Each monomer interacts with HK1 and the receiver domain of TcrA. In terms of processing, phosphorylated by HK1.

It is found in the cell membrane. It carries out the reaction ATP + protein L-histidine = ADP + protein N-phospho-L-histidine.. In terms of biological role, member of the three-protein two-component system HK1/HK2/TcrA. HK2 transfers its phosphoryl group to TcrA. This is Sensor histidine kinase component HK2 from Mycobacterium tuberculosis (strain ATCC 25618 / H37Rv).